The primary structure comprises 122 residues: LYR motif-containing protein 1 (122 aa).

Belongs to the complex I LYR family.

The sequence is that of LYR motif-containing protein 1 (lyrm1) from Xenopus laevis (African clawed frog).